Consider the following 260-residue polypeptide: UPF0246 protein Mmwyl1_3597 (260 aa).

Belongs to the UPF0246 family.

The protein is UPF0246 protein Mmwyl1_3597 of Marinomonas sp. (strain MWYL1).